A 69-amino-acid polypeptide reads, in one-letter code: Ribosome modulation factor (69 aa).

Belongs to the ribosome modulation factor family.

It is found in the cytoplasm. In terms of biological role, during stationary phase, converts 70S ribosomes to an inactive dimeric form (100S ribosomes). The protein is Ribosome modulation factor of Chromohalobacter salexigens (strain ATCC BAA-138 / DSM 3043 / CIP 106854 / NCIMB 13768 / 1H11).